Here is an 802-residue protein sequence, read N- to C-terminus: Ras GTPase-activating protein 4 (802 aa).

C2 domains lie at 1–105 and 116–232; these read MAKR…SGWT and VQGE…EGWF. 12 residues coordinate Ca(2+): D21, D27, D74, D76, S79, D82, D149, D155, D202, D204, S207, and D210. The Ras-GAP domain maps to 317-545; it reads GLAKDFLDLL…AQLKDFIMKL (229 aa). The 108-residue stretch at 565 to 672 folds into the PH domain; sequence PPVKEGPLFI…WLSALRKAST (108 aa). The segment at 674–710 adopts a Btk-type zinc-finger fold; sequence NRGLLRSYHPGIFRGDKWSCCHQKDKTDQGCDKTHSR. 4 residues coordinate Zn(2+): H682, C693, C694, and C704.

Ca(2+) serves as cofactor. As to expression, isoform 2 is expressed in osteoblasts.

The protein resides in the cytoplasm. It localises to the cytosol. It is found in the cell membrane. In terms of biological role, ca(2+)-dependent Ras GTPase-activating protein, that switches off the Ras-MAPK pathway following a stimulus that elevates intracellular calcium. Functions as an adaptor for Cdc42 and Rac1 during FcR-mediated phagocytosis. Isoform 2 activates the Ras pathway and promotes RANKL shedding by modulating the expression of MMP14. This is Ras GTPase-activating protein 4 (Rasa4) from Mus musculus (Mouse).